The chain runs to 309 residues: Malate dehydrogenase (309 aa).

Residues 7–12 (GAGHVG) and aspartate 32 each bind NAD(+). Residues arginine 81 and arginine 87 each coordinate substrate. Residues asparagine 94 and 117 to 119 (VSN) contribute to the NAD(+) site. The substrate site is built by asparagine 119 and arginine 150. Catalysis depends on histidine 174, which acts as the Proton acceptor.

Belongs to the LDH/MDH superfamily. MDH type 3 family.

It catalyses the reaction (S)-malate + NAD(+) = oxaloacetate + NADH + H(+). Its function is as follows. Catalyzes the reversible oxidation of malate to oxaloacetate. This chain is Malate dehydrogenase, found in Chlorobium phaeovibrioides (strain DSM 265 / 1930) (Prosthecochloris vibrioformis (strain DSM 265)).